The chain runs to 257 residues: Type III pantothenate kinase (257 aa).

Position 6-13 (6-13 (DVGNTNTV)) interacts with ATP. Substrate is bound by residues tyrosine 102 and 109-112 (GADR). Aspartate 111 (proton acceptor) is an active-site residue. Aspartate 131 contributes to the K(+) binding site. Threonine 134 serves as a coordination point for ATP. Threonine 186 contacts substrate.

Belongs to the type III pantothenate kinase family. Homodimer. NH4(+) is required as a cofactor. The cofactor is K(+).

It is found in the cytoplasm. It catalyses the reaction (R)-pantothenate + ATP = (R)-4'-phosphopantothenate + ADP + H(+). The protein operates within cofactor biosynthesis; coenzyme A biosynthesis; CoA from (R)-pantothenate: step 1/5. Functionally, catalyzes the phosphorylation of pantothenate (Pan), the first step in CoA biosynthesis. The chain is Type III pantothenate kinase from Leptospira borgpetersenii serovar Hardjo-bovis (strain JB197).